The chain runs to 238 residues: Putative type I specificity subunit S.MpnORF201P (238 aa).

The protein belongs to the type-I restriction system S methylase family. The methyltransferase is composed of M and S polypeptides.

Its function is as follows. The specificity (S) subunit of a type I methyltransferase (MTase); this subunit dictates DNA sequence specificity. The single R subunit has multiple frameshifts and is probably not expressed. This chain is Putative type I specificity subunit S.MpnORF201P, found in Mycoplasma pneumoniae (strain ATCC 29342 / M129 / Subtype 1) (Mycoplasmoides pneumoniae).